A 171-amino-acid chain; its full sequence is uncharacterized protein (171 aa).

Disordered regions lie at residues 68–112 (NKNN…DQPY) and 152–171 (LPEK…SIKN). A compositionally biased stretch (acidic residues) spans 161-171 (DDEDDMFSIKN).

Belongs to the asfivirus H171R family.

It is found in the virion. This is an uncharacterized protein from African swine fever virus (strain Badajoz 1971 Vero-adapted) (Ba71V).